Reading from the N-terminus, the 221-residue chain is PKHD-type hydroxylase A9601_13531 (221 aa).

In terms of domain architecture, Fe2OG dioxygenase spans 80–174; sequence LIHGIMFTKS…RIVCVGWIES (95 aa). Fe cation-binding residues include histidine 98, aspartate 100, and histidine 155. Arginine 165 contributes to the 2-oxoglutarate binding site.

The cofactor is Fe(2+). L-ascorbate is required as a cofactor.

This chain is PKHD-type hydroxylase A9601_13531, found in Prochlorococcus marinus (strain AS9601).